A 294-amino-acid chain; its full sequence is Probable cobalamin biosynthesis protein CobD (294 aa).

The next 4 helical transmembrane spans lie at 52-72, 73-93, 145-165, and 268-288; these read AGLL…IVPF, YAPF…SFAI, DSVV…AVIY, and IYWL…ATGV.

This sequence belongs to the CobD/CbiB family.

The protein localises to the cell membrane. The protein operates within cofactor biosynthesis; adenosylcobalamin biosynthesis. Functionally, converts cobyric acid to cobinamide by the addition of aminopropanol on the F carboxylic group. This Thermococcus kodakarensis (strain ATCC BAA-918 / JCM 12380 / KOD1) (Pyrococcus kodakaraensis (strain KOD1)) protein is Probable cobalamin biosynthesis protein CobD.